The chain runs to 304 residues: GTPase Era (304 aa).

Residues 11–186 enclose the Era-type G domain; the sequence is YCGFIAIVGR…LRKGVHHFPE (176 aa). A G1 region spans residues 19 to 26; sequence GRPNVGKS. Residue 19 to 26 coordinates GTP; that stretch reads GRPNVGKS. Residues 45 to 49 form a G2 region; that stretch reads QTTRH. The G3 stretch occupies residues 66 to 69; that stretch reads DTPG. Residues 66–70 and 128–131 each bind GTP; these read DTPGL and NKVD. Positions 128–131 are G4; it reads NKVD. The G5 stretch occupies residues 158 to 160; sequence ISA. A KH type-2 domain is found at 210–287; sequence TGEELPYSVT…HLELWVKVKS (78 aa).

Belongs to the TRAFAC class TrmE-Era-EngA-EngB-Septin-like GTPase superfamily. Era GTPase family. Monomer.

It localises to the cytoplasm. Its subcellular location is the cell inner membrane. An essential GTPase that binds both GDP and GTP, with rapid nucleotide exchange. Plays a role in 16S rRNA processing and 30S ribosomal subunit biogenesis and possibly also in cell cycle regulation and energy metabolism. In Histophilus somni (strain 2336) (Haemophilus somnus), this protein is GTPase Era.